The chain runs to 961 residues: MDELGIPVYKRGFPEHLLRGYEFTIDVGTKIESVGGRHDVTKIPEMNAYDIKQESIRTALWYNPIRNDGIVLPRVLDITLRGYDERRAVVESTRHKSFHTNDQWVQWMMKDSMDAQPLKVGLDDQSRNVAHSLHNCVVKIDSKKADTMSYHVEPIEDASKGCLHTRTMMWNHLVRIETFHTAQEVHILFKPTYDIVVHAERRDRSQPFRPGDQTLINFGRGQKVHMNHNSYDKMVEGLTHLVMRGKMPEVIRDDIASLDEICNRWIQSRHDPGEVKAYELCKILSTIGRKVLDREKEPEDEANLSIRFQEAIDNKFRQHDPERLKIFEHGNQRRDEDRFYILLMIAASDTFNTRVWWSNPYPCLRGTLIASETKLGDVYSMMRSWYDWSVRPTYTPYEKTREQEEYIYGRVNLFDFVAEPGIKIVHWEYRLNHSTREITYAQGNPCDLYPEDDDVIVTKFDDVAYGQMINEMINGGWNQEQFKMHKILKTEGNVLTIDFEKDAKLTTNEGVTMPEYFNKWIIAPMFNANVRIKHEEIAQRQSDDPMVKRTLSPITADPIELQRLTLARFYDIRPALRGQALSRQQAQSTYDEEISKKAGYAEVLKRRGIVQIPKKPCPTVTAQYTLERYALFIINYLQQHVARDCDEEAIYEHPKADHELEIFGESIVDISQVIVLVFDLIFERRRRVRDVYESRYIIARIREMRGKEKLNVIAEFFPTYGSLLNGLSGATVVQDIMYLNFLPLYFLVGDNMIYSHRQWSIPLLLYTHEVMVIPLEVGSYNDRCGLIAYLEYMVFFPSKAIRLSKLNEAHAKIAREMLKYYANTTVYDGGDNSNVVTTKQLLYETYLASLCGGFLDGIVWYLPITHPNKCIVAIEVSDERVPASVRAGRIRLRFPLSARHLKGVVIIQVDLGGRFTVYSEGIVSHRVCKKNLLKYMCDIILLKFSGHVFGNDEMLTKLLNV.

It belongs to the orbivirus VP2 family.

The protein resides in the virion. Its function is as follows. The VP2 protein is one of the two proteins (with VP5) which constitute the virus particle outer capsid. It is the major target of the host immunogenic response. Responsible for viral attachment to target host cell, probably by binding to sialic acid. This attachment induces virion internalization predominantly through clathrin-dependent endocytosis. This chain is Outer capsid protein VP2 (Segment-2), found in Bluetongue virus 1 (isolate South Africa vaccine) (BTV 1).